The primary structure comprises 400 residues: CinA-like protein (400 aa).

This sequence belongs to the CinA family.

This is CinA-like protein from Escherichia coli (strain SE11).